The chain runs to 1849 residues: NADH-ubiquinone oxidoreductase chain 5 (1849 aa).

41 consecutive transmembrane segments (helical) span residues Tyr-76–Tyr-93, Leu-98–Tyr-120, Tyr-190–Trp-212, Leu-222–Tyr-244, His-279–Ser-301, Leu-316–Tyr-338, Leu-358–Val-380, Val-390–Ile-412, Ile-419–Leu-441, Leu-483–Val-505, Leu-510–Val-532, Ile-536–Ile-558, Leu-565–Ile-587, Ile-621–Val-640, Trp-683–Phe-705, Leu-718–Leu-740, Ile-745–Leu-767, Pro-797–Val-819, Ile-868–Leu-890, Leu-905–Leu-927, Leu-966–Glu-988, Pro-1008–Leu-1030, Leu-1073–Phe-1095, Leu-1105–Leu-1127, Thr-1172–Ile-1194, Val-1219–His-1241, Gly-1248–Tyr-1270, Ile-1296–Leu-1318, Phe-1330–Tyr-1352, Met-1357–Ile-1379, Leu-1418–Thr-1440, Val-1444–Leu-1466, Ala-1478–Leu-1500, Val-1504–Thr-1526, Lys-1533–Phe-1555, Leu-1559–His-1581, Ile-1602–Ala-1624, Val-1639–Ile-1661, Leu-1719–Gly-1741, Val-1773–Asn-1795, and Ile-1802–Leu-1824.

This sequence belongs to the complex I subunit 5 family.

The protein localises to the hydrogenosome membrane. It carries out the reaction a ubiquinone + NADH + 5 H(+)(in) = a ubiquinol + NAD(+) + 4 H(+)(out). The sequence is that of NADH-ubiquinone oxidoreductase chain 5 (nad5) from Nyctotherus ovalis.